The sequence spans 125 residues: Secreted RxLR effector protein 55 (125 aa).

The N-terminal stretch at 1–21 (MAASRSSITTLLLLIVAVALG) is a signal peptide. Residues 35-38 (RQLR) carry the RxLR motif. The segment covering 51–87 (ESATSSSSSSALDHKSSAPGEATNASETEHSAASTAS) has biased composition (low complexity). The segment at 51–96 (ESATSSSSSSALDHKSSAPGEATNASETEHSAASTASEPKHEGPTM) is disordered. A glycan (N-linked (GlcNAc...) asparagine) is linked at asparagine 74. Residues 99–119 (FVGPAAAGVLAILLIGAVIAF) traverse the membrane as a helical segment.

Belongs to the RxLR effector family.

Its subcellular location is the secreted. The protein resides in the host cell membrane. Its function is as follows. Effector that acts as a broad suppressor of cell death to interrupt plant immunity. Inhibits cell death induced by cell death-inducing proteins, including the PAMP elicitor INF1 from P.infestans. This Plasmopara viticola (Downy mildew of grapevine) protein is Secreted RxLR effector protein 55.